The primary structure comprises 52 residues: Large ribosomal subunit protein bL32c (52 aa).

The protein belongs to the bacterial ribosomal protein bL32 family.

It is found in the plastid. The protein localises to the chloroplast. In Morus indica (Mulberry), this protein is Large ribosomal subunit protein bL32c.